Reading from the N-terminus, the 616-residue chain is Dihydroxy-acid dehydratase (616 aa).

Asp-81 provides a ligand contact to Mg(2+). Cys-122 lines the [2Fe-2S] cluster pocket. Mg(2+) is bound by residues Asp-123 and Lys-124. Lys-124 carries the post-translational modification N6-carboxylysine. A [2Fe-2S] cluster-binding site is contributed by Cys-195. Glu-491 contacts Mg(2+). Ser-517 serves as the catalytic Proton acceptor.

The protein belongs to the IlvD/Edd family. In terms of assembly, homodimer. [2Fe-2S] cluster is required as a cofactor. The cofactor is Mg(2+).

The enzyme catalyses (2R)-2,3-dihydroxy-3-methylbutanoate = 3-methyl-2-oxobutanoate + H2O. It carries out the reaction (2R,3R)-2,3-dihydroxy-3-methylpentanoate = (S)-3-methyl-2-oxopentanoate + H2O. It participates in amino-acid biosynthesis; L-isoleucine biosynthesis; L-isoleucine from 2-oxobutanoate: step 3/4. The protein operates within amino-acid biosynthesis; L-valine biosynthesis; L-valine from pyruvate: step 3/4. Functionally, functions in the biosynthesis of branched-chain amino acids. Catalyzes the dehydration of (2R,3R)-2,3-dihydroxy-3-methylpentanoate (2,3-dihydroxy-3-methylvalerate) into 2-oxo-3-methylpentanoate (2-oxo-3-methylvalerate) and of (2R)-2,3-dihydroxy-3-methylbutanoate (2,3-dihydroxyisovalerate) into 2-oxo-3-methylbutanoate (2-oxoisovalerate), the penultimate precursor to L-isoleucine and L-valine, respectively. The polypeptide is Dihydroxy-acid dehydratase (Shewanella sediminis (strain HAW-EB3)).